Here is a 200-residue protein sequence, read N- to C-terminus: Probable GTP-binding protein EngB (200 aa).

The EngB-type G domain occupies 26-200; sequence SIPEVALAGR…IYEIAQCIKK (175 aa). Residues 34–41, 61–65, 80–83, 147–150, and 179–181 contribute to the GTP site; these read GRSNVGKS, GCTRQ, DLPG, TKID, and VSS. Mg(2+)-binding residues include Ser-41 and Thr-63.

It belongs to the TRAFAC class TrmE-Era-EngA-EngB-Septin-like GTPase superfamily. EngB GTPase family. Mg(2+) is required as a cofactor.

Functionally, necessary for normal cell division and for the maintenance of normal septation. The chain is Probable GTP-binding protein EngB from Ehrlichia ruminantium (strain Gardel).